The following is a 299-amino-acid chain: MSLYPSLEDLKVDKVIQAQTAYSANPASQAFVLVDASAALPPDGNLYPKLYPELSQYMGLSLNEAEICESMPMVSGAPAQGQLVARPSSVNYMVAPVTGNDAGIRRAEIKQGIREVILCKDQDGKIGLRLKSIDNGIFVQLVQANSPASLVGLRFGDQVLQINGENCAGWSSDKAHKVLKQAFGEKITMTIRDRPFERTVTMHKDSSGHVGFIFKSGKITSIVKDSSAARNGLLTDHHICEINGQNVIGLKDAQIADILSTAGTVVTITIMPTFIFEHIIKRMAPSIMKSLMDHTIPEV.

Ser-2 carries the N-acetylserine modification. The segment at 2–103 (SLYPSLEDLK…VAPVTGNDAG (102 aa)) is interaction with PDCD6IP. 3 consecutive short sequence motifs (LYPX(n)L motif) follow at residues 3-7 (LYPSL), 46-50 (LYPKL), and 50-54 (LYPEL). A Phosphoserine modification is found at Ser-6. Tyr-47 is modified (phosphotyrosine). PDZ domains follow at residues 115-194 (EVIL…IRDR) and 199-273 (TVTM…IMPT). 251–252 (KD) lines the a 1,2-diacyl-sn-glycero-3-phospho-(1D-myo-inositol-4,5-bisphosphate) pocket.

Monomer and homodimer. Interacts with SDC1, SDC2, SDC3, SDC4, NRXN2, EPHA7, EPHB1, NF2 isoform 1, TGFA, IL5RA, NFASC, SDCBP2 and PTPRJ. Interacts with PDCD6IP. Forms a complex with PDCD6IP and SDC2. Interacts (via C-terminus) with TGFBR1. Binds to FZD7; this interaction is increased by inositol trisphosphate (IP3). Interacts with SMO. Post-translationally, phosphorylated on tyrosine residues.

Its subcellular location is the cell junction. The protein resides in the focal adhesion. The protein localises to the adherens junction. It is found in the cell membrane. It localises to the endoplasmic reticulum membrane. Its subcellular location is the nucleus. The protein resides in the melanosome. The protein localises to the cytoplasm. It is found in the cytosol. It localises to the cytoskeleton. Its subcellular location is the secreted. The protein resides in the extracellular exosome. The protein localises to the membrane raft. In terms of biological role, multifunctional adapter protein involved in diverse array of functions including trafficking of transmembrane proteins, neuro and immunomodulation, exosome biogenesis, and tumorigenesis. Positively regulates TGFB1-mediated SMAD2/3 activation and TGFB1-induced epithelial-to-mesenchymal transition (EMT) and cell migration in various cell types. May increase TGFB1 signaling by enhancing cell-surface expression of TGFR1 by preventing the interaction between TGFR1 and CAV1 and subsequent CAV1-dependent internalization and degradation of TGFR1. In concert with SDC1/4 and PDCD6IP, regulates exosome biogenesis. Regulates migration, growth, proliferation, and cell cycle progression in a variety of cancer types. In adherens junctions may function to couple syndecans to cytoskeletal proteins or signaling components. Seems to couple transcription factor SOX4 to the IL-5 receptor (IL5RA). May also play a role in vesicular trafficking. Seems to be required for the targeting of TGFA to the cell surface in the early secretory pathway. This is Syntenin-1 (Sdcbp) from Mus musculus (Mouse).